A 375-amino-acid polypeptide reads, in one-letter code: Alcohol dehydrogenase 1 (375 aa).

The residue at position 2 (serine 2) is an N-acetylserine. Zn(2+) contacts are provided by cysteine 47, histidine 68, cysteine 98, cysteine 101, cysteine 104, cysteine 112, and cysteine 175. NAD(+) contacts are provided by residues 200–205 (WSGRVG), aspartate 224, and lysine 229. Lysine 234 bears the N6-succinyllysine mark. An NAD(+)-binding site is contributed by 293 to 295 (VGV). Lysine 340 carries the post-translational modification N6-succinyllysine. Arginine 370 lines the NAD(+) pocket.

Belongs to the zinc-containing alcohol dehydrogenase family. Class-I subfamily. As to quaternary structure, homodimer. Zn(2+) serves as cofactor.

It localises to the cytoplasm. The enzyme catalyses a primary alcohol + NAD(+) = an aldehyde + NADH + H(+). It carries out the reaction a secondary alcohol + NAD(+) = a ketone + NADH + H(+). This Geomys knoxjonesi (Jones' pocket gopher) protein is Alcohol dehydrogenase 1 (ADH1).